A 37-amino-acid polypeptide reads, in one-letter code: Conotoxin Bt1.8 (37 aa).

The propeptide occupies Pro1 to Lys20. 2 disulfide bridges follow: Cys22/Cys28 and Cys23/Cys36. The residue at position 36 (Cys36) is a Cysteine amide.

Belongs to the conotoxin A superfamily. Expressed by the venom duct.

The protein resides in the secreted. Its function is as follows. Alpha-conotoxins bind to the nicotinic acetylcholine receptors (nAChR) and inhibit them. This toxin inhibits mammalian alpha-3-beta-2/CHRNA3-CHRNB2 nAChR (IC(50)=9.4 nM (rat), IC(50)=8.8 nM (human)), as well as the subunit chimera alpha-6/alpha-3-beta-2-beta-3 nAChR (CHRNA6/CHRNA3-CHRNB2-CHRNB3)(IC(50)=2.1 nM (rat), IC(50)=1.7 nM (human)). Binds to rat alpha-6/alpha-3-beta-2-beta-3 more rapidly than to alpha-3-beta-2, and dissociates more rapidly from alpha-3-beta-2 than from alpha-6/alpha-3-beta-2-beta-3. The sequence is that of Conotoxin Bt1.8 from Conus betulinus (Beech cone).